The sequence spans 98 residues: Co-chaperonin GroES (98 aa).

This sequence belongs to the GroES chaperonin family. Heptamer of 7 subunits arranged in a ring. Interacts with the chaperonin GroEL.

It localises to the cytoplasm. Functionally, together with the chaperonin GroEL, plays an essential role in assisting protein folding. The GroEL-GroES system forms a nano-cage that allows encapsulation of the non-native substrate proteins and provides a physical environment optimized to promote and accelerate protein folding. GroES binds to the apical surface of the GroEL ring, thereby capping the opening of the GroEL channel. The polypeptide is Co-chaperonin GroES (Agrobacterium fabrum (strain C58 / ATCC 33970) (Agrobacterium tumefaciens (strain C58))).